Here is a 901-residue protein sequence, read N- to C-terminus: HTH-type transcriptional regulator MalT (901 aa).

An ATP-binding site is contributed by 39–46 (SPAGYGKT). One can recognise an HTH luxR-type domain in the interval 829-894 (ELIRTSPLTQ…AAVQHAQKLL (66 aa)). The H-T-H motif DNA-binding region spans 853 to 872 (NEQIAGELEVAATTIKTHIR).

Belongs to the MalT family. In terms of assembly, monomer in solution. Oligomerizes to an active state in the presence of the positive effectors ATP and maltotriose.

With respect to regulation, activated by ATP and maltotriose, which are both required for DNA binding. Functionally, positively regulates the transcription of the maltose regulon whose gene products are responsible for uptake and catabolism of malto-oligosaccharides. Specifically binds to the promoter region of its target genes, recognizing a short DNA motif called the MalT box. The protein is HTH-type transcriptional regulator MalT of Escherichia coli O6:H1 (strain CFT073 / ATCC 700928 / UPEC).